The sequence spans 308 residues: Elongation factor Ts (308 aa).

The interval 80-83 is involved in Mg(2+) ion dislocation from EF-Tu; that stretch reads TDFV.

This sequence belongs to the EF-Ts family.

The protein resides in the cytoplasm. Functionally, associates with the EF-Tu.GDP complex and induces the exchange of GDP to GTP. It remains bound to the aminoacyl-tRNA.EF-Tu.GTP complex up to the GTP hydrolysis stage on the ribosome. This is Elongation factor Ts from Allorhizobium ampelinum (strain ATCC BAA-846 / DSM 112012 / S4) (Agrobacterium vitis (strain S4)).